The primary structure comprises 653 residues: Chromosomal replication initiator protein DnaA (653 aa).

The tract at residues 1 to 100 (MADVPADLAA…SAGEPPASAS (100 aa)) is domain I, interacts with DnaA modulators. Residues 86–310 (ITVDDSAGEP…PAPATGPGEP (225 aa)) are disordered. The domain II stretch occupies residues 101-312 (PAPPRYEEPE…PATGPGEPTA (212 aa)). Basic and acidic residues-rich tracts occupy residues 120–150 (DPYESRGREGYEGYGRHRADDHRQGHNDRHQ) and 221–267 (PSYD…RRNI). Over residues 284–310 (GSALPASSGAPGPLAAQPAPATGPGEP) the composition is skewed to low complexity. A domain III, AAA+ region region spans residues 313–529 (RLNPKYLFDT…GALIRVTAFA (217 aa)). ATP contacts are provided by Gly-357, Gly-359, Lys-360, and Thr-361. Residues 530–653 (SLNRQPVDLG…TELTNRIKNG (124 aa)) form a domain IV, binds dsDNA region.

This sequence belongs to the DnaA family. Oligomerizes as a right-handed, spiral filament on DNA at oriC.

The protein resides in the cytoplasm. In terms of biological role, plays an essential role in the initiation and regulation of chromosomal replication. ATP-DnaA binds to the origin of replication (oriC) to initiate formation of the DNA replication initiation complex once per cell cycle. Binds the DnaA box (a 9 base pair repeat at the origin) and separates the double-stranded (ds)DNA. Forms a right-handed helical filament on oriC DNA; dsDNA binds to the exterior of the filament while single-stranded (ss)DNA is stabiized in the filament's interior. The ATP-DnaA-oriC complex binds and stabilizes one strand of the AT-rich DNA unwinding element (DUE), permitting loading of DNA polymerase. After initiation quickly degrades to an ADP-DnaA complex that is not apt for DNA replication. Binds acidic phospholipids. This is Chromosomal replication initiator protein DnaA from Streptomyces avermitilis (strain ATCC 31267 / DSM 46492 / JCM 5070 / NBRC 14893 / NCIMB 12804 / NRRL 8165 / MA-4680).